The primary structure comprises 450 residues: E3 ubiquitin-protein ligase XB3 (450 aa).

ANK repeat units lie at residues 11–40 (GDEH…SLAR), 46–75 (DRLS…PPDA), 79–108 (HKQT…NILM), 113–142 (HART…TTPV), 158–187 (HGAT…IVSA), and 195–225 (PGST…RLQR). Positions 291–312 (ILNGTKYSLPSPSPGDDSADDD) are disordered. The segment at 323–372 (CCICFDQACTIEVQDCGHQMCAPCTLALCCHNKPNPTTLTPPSPACPFCR) adopts an RING-type zinc-finger fold. The disordered stretch occupies residues 385–450 (SACDPDKPSS…SNLDKPEHDL (66 aa)).

Interacts (via ankyrin repeats) with XA21. In terms of processing, phosphorylated by XA21.

It carries out the reaction S-ubiquitinyl-[E2 ubiquitin-conjugating enzyme]-L-cysteine + [acceptor protein]-L-lysine = [E2 ubiquitin-conjugating enzyme]-L-cysteine + N(6)-ubiquitinyl-[acceptor protein]-L-lysine.. It functions in the pathway protein modification; protein ubiquitination. E3 ubiquitin-protein ligase required for full accumulation of the LRR receptor kinase XA21 and XA21-mediated disease resistance. Binding to XA21 may stabilize the receptor kinase and maintain its protein level. Autoubiquitinated in vitro. The chain is E3 ubiquitin-protein ligase XB3 (XB3) from Oryza sativa subsp. japonica (Rice).